Consider the following 581-residue polypeptide: Proline--tRNA ligase (581 aa).

The protein belongs to the class-II aminoacyl-tRNA synthetase family. ProS type 1 subfamily. In terms of assembly, homodimer.

The protein localises to the cytoplasm. The enzyme catalyses tRNA(Pro) + L-proline + ATP = L-prolyl-tRNA(Pro) + AMP + diphosphate. In terms of biological role, catalyzes the attachment of proline to tRNA(Pro) in a two-step reaction: proline is first activated by ATP to form Pro-AMP and then transferred to the acceptor end of tRNA(Pro). As ProRS can inadvertently accommodate and process non-cognate amino acids such as alanine and cysteine, to avoid such errors it has two additional distinct editing activities against alanine. One activity is designated as 'pretransfer' editing and involves the tRNA(Pro)-independent hydrolysis of activated Ala-AMP. The other activity is designated 'posttransfer' editing and involves deacylation of mischarged Ala-tRNA(Pro). The misacylated Cys-tRNA(Pro) is not edited by ProRS. This Rhodococcus opacus (strain B4) protein is Proline--tRNA ligase.